Consider the following 444-residue polypeptide: N-succinylarginine dihydrolase (444 aa).

Substrate is bound by residues Ala19–Ser28, Asn110, and His137–Arg138. The active site involves Glu174. Position 214 (Arg214) interacts with substrate. His250 is an active-site residue. The substrate site is built by Asp252 and Asn362. Residue Cys368 is the Nucleophile of the active site.

It belongs to the succinylarginine dihydrolase family. In terms of assembly, homodimer.

The enzyme catalyses N(2)-succinyl-L-arginine + 2 H2O + 2 H(+) = N(2)-succinyl-L-ornithine + 2 NH4(+) + CO2. It functions in the pathway amino-acid degradation; L-arginine degradation via AST pathway; L-glutamate and succinate from L-arginine: step 2/5. In terms of biological role, catalyzes the hydrolysis of N(2)-succinylarginine into N(2)-succinylornithine, ammonia and CO(2). This chain is N-succinylarginine dihydrolase, found in Shewanella baltica (strain OS155 / ATCC BAA-1091).